Here is a 274-residue protein sequence, read N- to C-terminus: 2,3,4,5-tetrahydropyridine-2,6-dicarboxylate N-succinyltransferase (274 aa).

Residues arginine 106 and aspartate 143 each coordinate substrate.

Belongs to the transferase hexapeptide repeat family. In terms of assembly, homotrimer.

Its subcellular location is the cytoplasm. The enzyme catalyses (S)-2,3,4,5-tetrahydrodipicolinate + succinyl-CoA + H2O = (S)-2-succinylamino-6-oxoheptanedioate + CoA. It participates in amino-acid biosynthesis; L-lysine biosynthesis via DAP pathway; LL-2,6-diaminopimelate from (S)-tetrahydrodipicolinate (succinylase route): step 1/3. This chain is 2,3,4,5-tetrahydropyridine-2,6-dicarboxylate N-succinyltransferase, found in Albidiferax ferrireducens (strain ATCC BAA-621 / DSM 15236 / T118) (Rhodoferax ferrireducens).